Consider the following 479-residue polypeptide: GDP-fucose protein O-fucosyltransferase 3 (479 aa).

Residues 1-8 lie on the Cytoplasmic side of the membrane; that stretch reads MVRIQRRK. The helical; Signal-anchor for type II membrane protein transmembrane segment at 9 to 31 threads the bilayer; the sequence is LLASCLCVTATVFLLVTLQVMVE. Over 32–479 the chain is Lumenal; it reads LGKFERKEFK…QEFWGLVFKD (448 aa). N-linked (GlcNAc...) asparagine glycosylation is found at Asn110 and Asn168. The cysteines at positions 389 and 392 are disulfide-linked.

Belongs to the glycosyltransferase 10 family. In terms of tissue distribution, expressed in lung, digestive tract, gall bladder, placenta, kidney, uterus and brain. Not detected in spleen, heart, muscle, liver and pancreas.

The protein localises to the endoplasmic reticulum membrane. The protein resides in the golgi apparatus membrane. It is found in the golgi apparatus. Its subcellular location is the lysosome. The catalysed reaction is L-threonyl-[protein] + GDP-beta-L-fucose = 3-O-(alpha-L-fucosyl)-L-threonyl-[protein] + GDP + H(+). It catalyses the reaction L-seryl-[protein] + GDP-beta-L-fucose = 3-O-(alpha-L-fucosyl)-L-seryl-[protein] + GDP + H(+). It functions in the pathway protein modification; protein glycosylation. Its function is as follows. Protein O-fucosyltransferase that specifically catalyzes O-fucosylation of serine or threonine residues in EMI domains of target proteins, such as MMRN1, MMRN2 and EMID1. Attaches fucose through an O-glycosidic linkage. O-fucosylation of EMI domain-containing proteins may be required for facilitating protein folding and secretion. May also show alpha-(1,3)-fucosyltransferase activity toward the innermost N-acetyl glucosamine (GlcNAc) residue in biantennary N-glycan acceptors. However, this was tested with a library of synthetic substrates and this activity is unsure in vivo. May be involved in biosynthesis of Lewis X-carrying biantennary N-glycans that regulate neuron stem cell self-renewal during brain development. The protein is GDP-fucose protein O-fucosyltransferase 3 of Homo sapiens (Human).